We begin with the raw amino-acid sequence, 266 residues long: Small ribosomal subunit protein uS3 (266 aa).

One can recognise a KH type-2 domain in the interval 39–107 (VREYLKKKLK…PVHVNIEEIR (69 aa)). Positions 214–266 (PVVEEVTEDKRPRRNARPGDRRPRRDGEGGAPGARRGGPRRGAGKPEDGKTGE) are disordered. Basic and acidic residues-rich tracts occupy residues 230–241 (RPGDRRPRRDGE) and 257–266 (GKPEDGKTGE).

It belongs to the universal ribosomal protein uS3 family. In terms of assembly, part of the 30S ribosomal subunit. Forms a tight complex with proteins S10 and S14.

In terms of biological role, binds the lower part of the 30S subunit head. Binds mRNA in the 70S ribosome, positioning it for translation. This chain is Small ribosomal subunit protein uS3, found in Burkholderia thailandensis (strain ATCC 700388 / DSM 13276 / CCUG 48851 / CIP 106301 / E264).